Consider the following 307-residue polypeptide: Ornithine carbamoyltransferase (307 aa).

Carbamoyl phosphate is bound by residues 54 to 57 (STRT), Q81, R105, and 132 to 135 (HPCQ). L-ornithine is bound by residues N163, D221, and 225 to 226 (SM). Residues 261-262 (CL) and R289 contribute to the carbamoyl phosphate site.

Belongs to the aspartate/ornithine carbamoyltransferase superfamily. OTCase family.

It localises to the cytoplasm. It carries out the reaction carbamoyl phosphate + L-ornithine = L-citrulline + phosphate + H(+). It participates in amino-acid biosynthesis; L-arginine biosynthesis; L-arginine from L-ornithine and carbamoyl phosphate: step 1/3. Functionally, reversibly catalyzes the transfer of the carbamoyl group from carbamoyl phosphate (CP) to the N(epsilon) atom of ornithine (ORN) to produce L-citrulline. The sequence is that of Ornithine carbamoyltransferase from Aromatoleum aromaticum (strain DSM 19018 / LMG 30748 / EbN1) (Azoarcus sp. (strain EbN1)).